We begin with the raw amino-acid sequence, 67 residues long: Protein SlyX homolog (67 aa).

The protein belongs to the SlyX family.

The chain is Protein SlyX homolog from Mesorhizobium japonicum (strain LMG 29417 / CECT 9101 / MAFF 303099) (Mesorhizobium loti (strain MAFF 303099)).